The following is a 185-amino-acid chain: Probable chorismate pyruvate-lyase 1 (185 aa).

Substrate-binding residues include Arg70, Leu108, and Glu166.

The protein belongs to the UbiC family.

It is found in the cytoplasm. It catalyses the reaction chorismate = 4-hydroxybenzoate + pyruvate. The protein operates within cofactor biosynthesis; ubiquinone biosynthesis. Functionally, removes the pyruvyl group from chorismate, with concomitant aromatization of the ring, to provide 4-hydroxybenzoate (4HB) for the ubiquinone pathway. This chain is Probable chorismate pyruvate-lyase 1, found in Pseudomonas fluorescens (strain Pf0-1).